The following is a 20-amino-acid chain: Citrate synthase (20 aa).

Belongs to the citrate synthase family. Homohexamer.

The catalysed reaction is oxaloacetate + acetyl-CoA + H2O = citrate + CoA + H(+). It functions in the pathway carbohydrate metabolism; tricarboxylic acid cycle; isocitrate from oxaloacetate: step 1/2. With respect to regulation, allosterically inhibited by NADH. The chain is Citrate synthase (gltA) from Streptomyces hygroscopicus.